The chain runs to 322 residues: MDTSSINAQSIFDDNAATLKLSWLTGHEGWERGFSADTVGNATSSADLVGHLNLIHPNRIQVLGEAEIDYYQRQTDEDRSRHMAELIALEPPFLVVAGGAAAPPELVLRCTRSSTPLFTTPMSAAAVIDSLRLYMSRILAPRATLHGVFLDILGMGVLLTGDSGLGKSELGLELISRGHGLVADDAVDFVRLGPDFVEGRCPPLLQNLLEVRGLGLLDIKTIFGETAVRRKMKLKLIVQLVRRPDGEFQRLPLESQTVDVLGLPISKVTIQVAAGRNLAVLVEAAVRNTILQLRGIDTLRDFMDRQRLAMQDPDSQFPGKLV.

Residues His146 and Lys167 contribute to the active site. 161–168 (GDSGLGKS) contributes to the ATP binding site. Mg(2+) is bound at residue Ser168. Catalysis depends on Asp185, which acts as the Proton acceptor; for phosphorylation activity. Proton donor; for dephosphorylation activity. An important for the catalytic mechanism of both phosphorylation and dephosphorylation region spans residues 209 to 218 (LEVRGLGLLD). Mg(2+) is bound at residue Glu210. Arg250 is a catalytic residue. Residues 271–276 (QVAAGR) form an important for the catalytic mechanism of dephosphorylation region.

Belongs to the HPrK/P family. Homohexamer. It depends on Mg(2+) as a cofactor.

The enzyme catalyses [HPr protein]-L-serine + ATP = [HPr protein]-O-phospho-L-serine + ADP + H(+). The catalysed reaction is [HPr protein]-O-phospho-L-serine + phosphate + H(+) = [HPr protein]-L-serine + diphosphate. In terms of biological role, catalyzes the ATP- as well as the pyrophosphate-dependent phosphorylation of a specific serine residue in HPr, a phosphocarrier protein of the phosphoenolpyruvate-dependent sugar phosphotransferase system (PTS). HprK/P also catalyzes the pyrophosphate-producing, inorganic phosphate-dependent dephosphorylation (phosphorolysis) of seryl-phosphorylated HPr (P-Ser-HPr). The chain is HPr kinase/phosphorylase from Burkholderia cenocepacia (strain HI2424).